The chain runs to 193 residues: Probable nicotinate-nucleotide adenylyltransferase (193 aa).

Belongs to the NadD family.

The enzyme catalyses nicotinate beta-D-ribonucleotide + ATP + H(+) = deamido-NAD(+) + diphosphate. The protein operates within cofactor biosynthesis; NAD(+) biosynthesis; deamido-NAD(+) from nicotinate D-ribonucleotide: step 1/1. In terms of biological role, catalyzes the reversible adenylation of nicotinate mononucleotide (NaMN) to nicotinic acid adenine dinucleotide (NaAD). The polypeptide is Probable nicotinate-nucleotide adenylyltransferase (Fusobacterium nucleatum subsp. nucleatum (strain ATCC 25586 / DSM 15643 / BCRC 10681 / CIP 101130 / JCM 8532 / KCTC 2640 / LMG 13131 / VPI 4355)).